A 456-amino-acid polypeptide reads, in one-letter code: Glutamyl-tRNA(Gln) amidotransferase subunit A (456 aa).

Catalysis depends on charge relay system residues lysine 74 and serine 149. The Acyl-ester intermediate role is filled by serine 173.

This sequence belongs to the amidase family. GatA subfamily. As to quaternary structure, heterotrimer of A, B and C subunits.

It carries out the reaction L-glutamyl-tRNA(Gln) + L-glutamine + ATP + H2O = L-glutaminyl-tRNA(Gln) + L-glutamate + ADP + phosphate + H(+). Its function is as follows. Allows the formation of correctly charged Gln-tRNA(Gln) through the transamidation of misacylated Glu-tRNA(Gln) in organisms which lack glutaminyl-tRNA synthetase. The reaction takes place in the presence of glutamine and ATP through an activated gamma-phospho-Glu-tRNA(Gln). This is Glutamyl-tRNA(Gln) amidotransferase subunit A from Methanobrevibacter smithii (strain ATCC 35061 / DSM 861 / OCM 144 / PS).